The primary structure comprises 269 residues: Sulfur carrier protein FdhD (269 aa).

Cys-111 acts as the Cysteine persulfide intermediate in catalysis.

This sequence belongs to the FdhD family.

It is found in the cytoplasm. Functionally, required for formate dehydrogenase (FDH) activity. Acts as a sulfur carrier protein that transfers sulfur from IscS to the molybdenum cofactor prior to its insertion into FDH. In Brucella melitensis biotype 1 (strain ATCC 23456 / CCUG 17765 / NCTC 10094 / 16M), this protein is Sulfur carrier protein FdhD.